Consider the following 343-residue polypeptide: GTPase Obg (343 aa).

The region spanning 1–159 (MKFVDSASIF…LQLDMELKLM (159 aa)) is the Obg domain. Residues 121–144 (GHGGRGNQHFATSTNQAPRRSEPG) form a disordered region. The segment covering 129–138 (HFATSTNQAP) has biased composition (polar residues). Positions 160–323 (ADVGLVGFPN…LKDELWREVS (164 aa)) constitute an OBG-type G domain. GTP contacts are provided by residues 166–173 (GFPNAGKS), 191–195 (FTTLV), 213–216 (DIPG), 280–283 (TKMD), and 304–306 (SSV). S173 and T193 together coordinate Mg(2+). The interval 322–343 (VSMRDRPEESSDPEGEGDGGTP) is disordered. The segment covering 331–343 (SSDPEGEGDGGTP) has biased composition (acidic residues).

Belongs to the TRAFAC class OBG-HflX-like GTPase superfamily. OBG GTPase family. In terms of assembly, monomer. Requires Mg(2+) as cofactor.

Its subcellular location is the cytoplasm. In terms of biological role, an essential GTPase which binds GTP, GDP and possibly (p)ppGpp with moderate affinity, with high nucleotide exchange rates and a fairly low GTP hydrolysis rate. Plays a role in control of the cell cycle, stress response, ribosome biogenesis and in those bacteria that undergo differentiation, in morphogenesis control. The chain is GTPase Obg from Chlorobium luteolum (strain DSM 273 / BCRC 81028 / 2530) (Pelodictyon luteolum).